A 351-amino-acid polypeptide reads, in one-letter code: Lipopolysaccharide core biosynthesis mannosyltransferase LpsB (351 aa).

Belongs to the glycosyltransferase group 1 family. Glycosyltransferase 4 subfamily.

Its pathway is bacterial outer membrane biogenesis; LPS core biosynthesis. Acts at transfer of mannose group to a 3-deoxy-D-mono octulonic acid (KDO) via an alpha-1,5 linkage. The polypeptide is Lipopolysaccharide core biosynthesis mannosyltransferase LpsB (lpsB) (Rhizobium meliloti (strain 1021) (Ensifer meliloti)).